We begin with the raw amino-acid sequence, 68 residues long: Putative membrane protein insertion efficiency factor (68 aa).

This sequence belongs to the UPF0161 family.

It localises to the cell membrane. Its function is as follows. Could be involved in insertion of integral membrane proteins into the membrane. This Herpetosiphon aurantiacus (strain ATCC 23779 / DSM 785 / 114-95) protein is Putative membrane protein insertion efficiency factor.